Consider the following 192-residue polypeptide: RNA pyrophosphohydrolase (192 aa).

Residues 6–149 enclose the Nudix hydrolase domain; it reads GYRPNVGIVI…KKDVYRKVMK (144 aa). A Nudix box motif is present at residues 38 to 59; that stretch reads GGINDNETAEQAMYRELYEEAG.

This sequence belongs to the Nudix hydrolase family. RppH subfamily. A divalent metal cation serves as cofactor.

Its function is as follows. Accelerates the degradation of transcripts by removing pyrophosphate from the 5'-end of triphosphorylated RNA, leading to a more labile monophosphorylated state that can stimulate subsequent ribonuclease cleavage. The protein is RNA pyrophosphohydrolase of Histophilus somni (strain 129Pt) (Haemophilus somnus).